Consider the following 641-residue polypeptide: Kelch-like protein 22 (641 aa).

A disordered region spans residues 1–25 (MAEDLETMKPSQAPQQPSLPQGSSK). A compositionally biased stretch (low complexity) spans 10–24 (PSQAPQQPSLPQGSS). The region spanning 50–117 (FDVVLKVEGK…IYTSDLALSV (68 aa)) is the BTB domain. Kelch repeat units lie at residues 299–349 (CVVG…VLNN), 350–399 (FVYL…VLGD), 400–446 (FLYA…ALDG), 448–493 (MYVA…ALQE), 494–544 (KIYL…VLAK), and 545–593 (KIFV…VLTL).

As to quaternary structure, component of the BCR(KLHL22) E3 ubiquitin ligase complex, at least composed of cul3, klhl22 and rbx1.

The protein localises to the cytoplasm. The protein resides in the cytosol. It localises to the cytoskeleton. It is found in the microtubule organizing center. Its subcellular location is the centrosome. The protein localises to the spindle. The protein resides in the nucleus. It localises to the lysosome. It functions in the pathway protein modification; protein ubiquitination. In terms of biological role, substrate-specific adapter of a BCR (BTB-CUL3-RBX1) E3 ubiquitin ligase complex. The BCR(KLHL22) ubiquitin ligase complex could mediate the monoubiquitination of PLK1 and regulate its activity in spindle assembly checkpoint (SAC) and chromosome segregation. The BCR(KLHL22) ubiquitin ligase complex may also be responsible for the ubiquitin-dependent proteasomal degradation of DEPDC5 and the activation of the TORC1 pathway. The sequence is that of Kelch-like protein 22 (klhl22) from Xenopus tropicalis (Western clawed frog).